Reading from the N-terminus, the 910-residue chain is MDSSGASSPDMEPSYGGGLFDMVKGGAGRLFSNLKDNLKDTLKDTSSRVIQSVTSYTKGDLDFTYVTSRIIVMSFPLDSVDIGFRNQVDDIRSFLDSRHLDHYTVYNLSPKSYRTAKFHSRVSECSWPIRQAPSLHNLFAVCRNMYNWLLQNPKNVCVVHCLDGRAASSILVGAMFIFCNLYSTPGPAVRLLYAKRPGIGLSPSHRRYLGYMCDLLADKPYRPHFKPLTIKSITVSPVPFFNKQRNGCRPYCDVLIGETKIYTTCADFERMKEYRVQDGKIFIPLSITVQGDVVVSMYHLRSTIGSRLQAKVTNTQIFQLQFHTGFIPLDTTVLKFTKPELDACDVPEKYPQLFQVTLDVELQPHDKVMELTPPWEHYCTKDVNPSILFSSHQEHQDTLVLGGQAPIDIPPDNPRHFGQGGFFSTLCWQDQKSEKSFCEEDHAALVNQESEQSDDELLTLSSPHGNANGDKPHAARKPSKKQQEPAAPAPPEDVDLLGLEGSAVSKNFSSPAAPPSNSELLSDLFGGGGAAGPVQSGQSGVDDVFHPSGPTSTQSTPRRSATSTSASPTLRVGEGATFDPFGAPSKPSGQDLLGSFLNTASASSDPFLQPTRSPSPTVHASSTPAVNIQPDVSGAWDWHTKPGGFGMGSKSAATSPTGSSHGTPTHQNKPQTLDPFADLGTLGGSSFASKPSTPTGLGGGFPPLSSPQKASPQPMGGGWQQGGGYNWQQTQSKPQSSMPHSSPQNRPNYNVSFSSMPGGQNERGKAAANLEGKQKAADFEDLLSGQGFNAHKDKKGPRTIAEMRKEEMAKEMDPEKLKILEWIEGKERNIRALLSTMHTVLWAGETKWKPVGMADLVTPEQVKKVYRKAVLVVHPDKATGQPYEQYAKMIFMELNDAWSEFENQGQKPLY.

3 consecutive repeat copies span residues 33 to 36 (NLKD), 37 to 40 (NLKD), and 41 to 44 (TLKD). Residues 33 to 44 (NLKDNLKDTLKD) form a 3 X 4 AA approximate tandem repeats region. Residues 52–219 (SVTSYTKGDL…GYMCDLLADK (168 aa)) form the Phosphatase tensin-type domain. Ser-109 carries the post-translational modification Phosphoserine. Cys-161 (phosphocysteine intermediate) is an active-site residue. In terms of domain architecture, C2 tensin-type spans 225–363 (FKPLTIKSIT…FQVTLDVELQ (139 aa)). An SH3-binding motif is present at residues 406–414 (PIDIPPDNP). A disordered region spans residues 448 to 772 (QESEQSDDEL…RGKAAANLEG (325 aa)). A phosphoserine mark is found at Ser-450, Ser-453, Ser-560, and Ser-567. Over residues 547–569 (PSGPTSTQSTPRRSATSTSASPT) the composition is skewed to low complexity. The span at 596–626 (FLNTASASSDPFLQPTRSPSPTVHASSTPAV) shows a compositional bias: polar residues. Over residues 651–666 (SAATSPTGSSHGTPTH) the composition is skewed to low complexity. Over residues 715–725 (MGGGWQQGGGY) the composition is skewed to gly residues. A compositionally biased stretch (polar residues) spans 732 to 758 (SKPQSSMPHSSPQNRPNYNVSFSSMPG). In terms of domain architecture, J spans 846 to 910 (TKWKPVGMAD…FENQGQKPLY (65 aa)).

In terms of assembly, forms a complex composed of HSPA8, CLTC and DNAJC6. Interacts with HSPA8/HSC70 in an ATP-dependent manner; this interaction stimulates the HSPA8's ATPase activity. Interacts with CLTC; this interaction produces a local change in heavy-chain contacts, creating a detectable global distortion of the clathrin coat. Interacts with AP2A2. Interacts with DNM1(GTP-bound form); this interaction allows clathrin-coated vesicle (CCV) formation at the plasma membrane. The N-terminus is blocked. Post-translationally, phosphorylation at Ser-567 modulates its ability to bind CLTC and therefore the synaptic vesicle endocytosis (SVE). Brain.

The protein resides in the cytoplasmic vesicle. Its subcellular location is the clathrin-coated vesicle. May act as a protein phosphatase and/or a lipid phosphatase. Co-chaperone that recruits HSPA8/HSC70 to clathrin-coated vesicles (CCVs) and promotes the ATP-dependent dissociation of clathrin from CCVs and participates in clathrin-mediated endocytosis of synaptic vesicles and their recycling and also in intracellular trafficking. Firstly, binds tightly to the clathrin cages, at a ratio of one DNAJC6 per clathrin triskelion. The HSPA8:ATP complex then binds to the clathrin-auxilin cage, initially at a ratio of one HSPA8 per triskelion leading to ATP hydrolysis stimulation and causing a conformational change in the HSPA8. This cycle is repeated three times to drive to a complex containing the clathrin-auxilin cage associated to three HSPA8:ADP complex. The ATP hydrolysis of the third HSPA8:ATP complex leads to a concerted dismantling of the cage into component triskelia. Then, dissociates from the released triskelia and be recycled to initiate another cycle of HSPA8's recruitment. Also acts during the early steps of clathrin-coated vesicle (CCV) formation through its interaction with the GTP bound form of DNM1. The protein is Auxilin of Bos taurus (Bovine).